Consider the following 233-residue polypeptide: NAD-dependent protein deacylase (233 aa).

The region spanning 1 to 230 is the Deacetylase sirtuin-type domain; it reads MKNIMILSGA…ALDIENFMKD (230 aa). 9 to 28 is an NAD(+) binding site; it reads GAGLSAPSGLKTFRDNDGLW. Substrate contacts are provided by Tyr-53 and Arg-56. Position 88-91 (88-91) interacts with NAD(+); the sequence is QNVD. The Proton acceptor role is filled by His-106. Residues Cys-114, Cys-117, Cys-133, and Cys-136 each contribute to the Zn(2+) site. Residues 172–174 and 200–202 contribute to the NAD(+) site; these read GTS and NLE.

This sequence belongs to the sirtuin family. Class III subfamily. It depends on Zn(2+) as a cofactor.

The protein localises to the cytoplasm. The catalysed reaction is N(6)-acetyl-L-lysyl-[protein] + NAD(+) + H2O = 2''-O-acetyl-ADP-D-ribose + nicotinamide + L-lysyl-[protein]. The enzyme catalyses N(6)-succinyl-L-lysyl-[protein] + NAD(+) + H2O = 2''-O-succinyl-ADP-D-ribose + nicotinamide + L-lysyl-[protein]. In terms of biological role, NAD-dependent lysine deacetylase and desuccinylase that specifically removes acetyl and succinyl groups on target proteins. Modulates the activities of several proteins which are inactive in their acylated form. The polypeptide is NAD-dependent protein deacylase (Campylobacter jejuni subsp. jejuni serotype O:2 (strain ATCC 700819 / NCTC 11168)).